The chain runs to 203 residues: Translation initiation factor IF-3 (203 aa).

It belongs to the IF-3 family. Monomer.

It is found in the cytoplasm. In terms of biological role, IF-3 binds to the 30S ribosomal subunit and shifts the equilibrium between 70S ribosomes and their 50S and 30S subunits in favor of the free subunits, thus enhancing the availability of 30S subunits on which protein synthesis initiation begins. The protein is Translation initiation factor IF-3 of Corynebacterium efficiens (strain DSM 44549 / YS-314 / AJ 12310 / JCM 11189 / NBRC 100395).